Here is a 171-residue protein sequence, read N- to C-terminus: 3-hydroxydecanoyl-[acyl-carrier-protein] dehydratase (171 aa).

His70 is an active-site residue.

The protein belongs to the thioester dehydratase family. FabA subfamily. Homodimer.

It localises to the cytoplasm. It carries out the reaction a (3R)-hydroxyacyl-[ACP] = a (2E)-enoyl-[ACP] + H2O. The catalysed reaction is (3R)-hydroxydecanoyl-[ACP] = (2E)-decenoyl-[ACP] + H2O. It catalyses the reaction (2E)-decenoyl-[ACP] = (3Z)-decenoyl-[ACP]. The protein operates within lipid metabolism; fatty acid biosynthesis. Necessary for the introduction of cis unsaturation into fatty acids. Catalyzes the dehydration of (3R)-3-hydroxydecanoyl-ACP to E-(2)-decenoyl-ACP and then its isomerization to Z-(3)-decenoyl-ACP. Can catalyze the dehydratase reaction for beta-hydroxyacyl-ACPs with saturated chain lengths up to 16:0, being most active on intermediate chain length. The chain is 3-hydroxydecanoyl-[acyl-carrier-protein] dehydratase from Pseudomonas syringae pv. syringae (strain B728a).